A 379-amino-acid chain; its full sequence is Chaperone protein DnaJ (379 aa).

Residues Asp5–Gly70 enclose the J domain. The CR-type zinc-finger motif lies at Gly139–Thr217. Positions 152, 155, 169, 172, 191, 194, 205, and 208 each coordinate Zn(2+). CXXCXGXG motif repeat units follow at residues Cys152 to Gly159, Cys169 to Gly176, Cys191 to Gly198, and Cys205 to Gly212.

The protein belongs to the DnaJ family. In terms of assembly, homodimer. Zn(2+) serves as cofactor.

Its subcellular location is the cytoplasm. Its function is as follows. Participates actively in the response to hyperosmotic and heat shock by preventing the aggregation of stress-denatured proteins and by disaggregating proteins, also in an autonomous, DnaK-independent fashion. Unfolded proteins bind initially to DnaJ; upon interaction with the DnaJ-bound protein, DnaK hydrolyzes its bound ATP, resulting in the formation of a stable complex. GrpE releases ADP from DnaK; ATP binding to DnaK triggers the release of the substrate protein, thus completing the reaction cycle. Several rounds of ATP-dependent interactions between DnaJ, DnaK and GrpE are required for fully efficient folding. Also involved, together with DnaK and GrpE, in the DNA replication of plasmids through activation of initiation proteins. This chain is Chaperone protein DnaJ, found in Paraburkholderia phytofirmans (strain DSM 17436 / LMG 22146 / PsJN) (Burkholderia phytofirmans).